Consider the following 199-residue polypeptide: Prostatic spermine-binding protein (199 aa).

A signal peptide spans 1 to 18 (MLLLLTLAFLASPTCRAQ). Residues 19-151 (NVLGNAAGKY…VRGIGFKWGN (133 aa)) enclose the Jacalin-type lectin domain. N-linked (GlcNAc...) asparagine glycosylation is present at Asn62. The disordered stretch occupies residues 159 to 199 (HYNNKEDKADNKDADNKDADNKDDGDEDDDGNDDDDQKDES). Residues 160–180 (YNNKEDKADNKDADNKDADNK) are compositionally biased toward basic and acidic residues. Acidic residues predominate over residues 181-199 (DDGDEDDDGNDDDDQKDES).

It to rat SBP. As to expression, prostate.

Functionally, this protein seems to be functional equivalent to rat prostatic spermine-binding protein, which is involved in polyamine binding. The polypeptide is Prostatic spermine-binding protein (Sbp) (Mus musculus (Mouse)).